The chain runs to 367 residues: Cyclic AMP-responsive element-binding protein 3-like protein 4 (367 aa).

The segment at 1 to 52 (MELGCPELLEPPEDIFSTGSFLELGFNGPPSKVPGLQKSESDDFLNLFIDPN) is required for transcriptional activation. At 1–267 (MELGCPELLE…QTSSRAAQTS (267 aa)) the chain is on the cytoplasmic side. Residues 58–81 (ETSPGSDSGVSEDPGSPAPQAPSS) are disordered. Residues 189 to 252 (ILKKIRRKIR…ISLVAQVHQL (64 aa)) enclose the bZIP domain. The tract at residues 191–230 (KKIRRKIRNKQSAQDSRRRKKEYIDGLESRVAACSEQNQK) is basic motif. Residues 231–252 (LQRKVQELERQNISLVAQVHQL) are leucine-zipper. Residues 268–288 (TCVLILLFSLALIILPSFSPF) traverse the membrane as a helical; Signal-anchor for type II membrane protein segment. The Lumenal segment spans residues 289 to 367 (QSQPEARSEG…IRGMVHADEM (79 aa)). Asn338 carries an N-linked (GlcNAc...) asparagine glycan.

Belongs to the bZIP family. ATF subfamily. In terms of assembly, binds DNA as a dimer. Forms a heterodimer with CREM isoform Delta. Post-translationally, controlled by regulated intramembrane proteolysis (RIP). Following ER stress a fragment containing the cytoplasmic transcription factor domain is released by proteolysis. The cleavage seems to be performed sequentially by site-1 and site-2 proteases (PS1 and PS2). PS1 cleavage may be suppressed by a determinant in the C-terminal region.

Its subcellular location is the endoplasmic reticulum membrane. The protein resides in the nucleus. In terms of biological role, transcriptional activator that may play a role in the unfolded protein response. Binds to the UPR element (UPRE) but not to CRE element. Preferentially binds DNA with to the consensus sequence 5'-T[GT]ACGT[GA][GT]-3' and has transcriptional activation activity from UPRE. Binds to NF-kappa-B site and has transcriptional activation activity from NF-kappa-B-containing regulatory elements. Increases the binding of CREM isoform Delta with CRE. The CREM isoform Delta-CREB3L4 heterodimer functions through CRE but not through UPRE and may recruit HIRA to CRE to regulate histone exchange. The chain is Cyclic AMP-responsive element-binding protein 3-like protein 4 (Creb3l4) from Rattus norvegicus (Rat).